The sequence spans 297 residues: 3-mercaptopyruvate sulfurtransferase (297 aa).

Ala2 is modified (N-acetylalanine). 4 positions are modified to phosphoserine: Ser3, Trp15, Pro23, and Ser35. The Rhodanese 1 domain occupies 25 to 144 (AGQPLQLLDA…WLRQNLPLSS (120 aa)). The residue at position 40 (Lys40) is an N6-acetyllysine; alternate. Lys40 is modified (N6-succinyllysine; alternate). Positions 145-160 (GKSQPAPAEFRAQLDP) are hinge. Lys146 and Lys164 each carry N6-succinyllysine. The region spanning 174–288 (ESRRFQVVDS…WYMRARPEDV (115 aa)) is the Rhodanese 2 domain. Arg188 serves as a coordination point for substrate. Cys248 (cysteine persulfide intermediate) is an active-site residue.

In terms of assembly, monomer (active form). Homodimer; disulfide-linked (inactive form).

The protein resides in the cytoplasm. The protein localises to the mitochondrion. Its subcellular location is the synapse. It localises to the synaptosome. The catalysed reaction is 2-oxo-3-sulfanylpropanoate + [thioredoxin]-dithiol = [thioredoxin]-disulfide + hydrogen sulfide + pyruvate + H(+). Its activity is regulated as follows. By oxidative stress, and thioredoxin. Under oxidative stress conditions, the catalytic cysteine site is converted to a sulfenate which inhibits the MPST enzyme activity. Reduced thioredoxin cleaves an intersubunit disulfide bond to turn on the redox switch and reactivate the enzyme. In terms of biological role, transfer of a sulfur ion to cyanide or to other thiol compounds. Also has weak rhodanese activity. Detoxifies cyanide and is required for thiosulfate biosynthesis. Acts as an antioxidant. In combination with cysteine aminotransferase (CAT), contributes to the catabolism of cysteine and is an important producer of hydrogen sulfide in the brain, retina and vascular endothelial cells. Hydrogen sulfide H(2)S is an important synaptic modulator, signaling molecule, smooth muscle contractor and neuroprotectant. Its production by the 3MST/CAT pathway is regulated by calcium ions. This chain is 3-mercaptopyruvate sulfurtransferase (MPST), found in Homo sapiens (Human).